Reading from the N-terminus, the 179-residue chain is ATP synthase subunit delta (179 aa).

It belongs to the ATPase delta chain family. As to quaternary structure, F-type ATPases have 2 components, F(1) - the catalytic core - and F(0) - the membrane proton channel. F(1) has five subunits: alpha(3), beta(3), gamma(1), delta(1), epsilon(1). F(0) has three main subunits: a(1), b(2) and c(10-14). The alpha and beta chains form an alternating ring which encloses part of the gamma chain. F(1) is attached to F(0) by a central stalk formed by the gamma and epsilon chains, while a peripheral stalk is formed by the delta and b chains.

The protein resides in the cell inner membrane. F(1)F(0) ATP synthase produces ATP from ADP in the presence of a proton or sodium gradient. F-type ATPases consist of two structural domains, F(1) containing the extramembraneous catalytic core and F(0) containing the membrane proton channel, linked together by a central stalk and a peripheral stalk. During catalysis, ATP synthesis in the catalytic domain of F(1) is coupled via a rotary mechanism of the central stalk subunits to proton translocation. Functionally, this protein is part of the stalk that links CF(0) to CF(1). It either transmits conformational changes from CF(0) to CF(1) or is implicated in proton conduction. The protein is ATP synthase subunit delta of Burkholderia lata (strain ATCC 17760 / DSM 23089 / LMG 22485 / NCIMB 9086 / R18194 / 383).